The following is a 431-amino-acid chain: Hydroxylamine reductase (431 aa).

[4Fe-4S] cluster-binding residues include Cys5, Cys8, Cys17, and Cys23. Residues His131, Glu155, Cys199, Cys286, Cys314, Cys339, Glu373, and Lys375 each coordinate hybrid [4Fe-2O-2S] cluster. Residue Cys286 is modified to Cysteine persulfide.

Belongs to the HCP family. [4Fe-4S] cluster is required as a cofactor. It depends on hybrid [4Fe-2O-2S] cluster as a cofactor.

It is found in the cytoplasm. It catalyses the reaction A + NH4(+) + H2O = hydroxylamine + AH2 + H(+). In terms of biological role, catalyzes the reduction of hydroxylamine to form NH(3) and H(2)O. The protein is Hydroxylamine reductase of Thermotoga petrophila (strain ATCC BAA-488 / DSM 13995 / JCM 10881 / RKU-1).